The sequence spans 490 residues: Cytochrome P450 2C28 (490 aa).

Phosphoserine is present on Ser127. Lys249 and Lys375 each carry N6-acetyllysine. Cys435 provides a ligand contact to heme.

This sequence belongs to the cytochrome P450 family. It depends on heme as a cofactor. Liver.

It localises to the endoplasmic reticulum membrane. It is found in the microsome membrane. It carries out the reaction an organic molecule + reduced [NADPH--hemoprotein reductase] + O2 = an alcohol + oxidized [NADPH--hemoprotein reductase] + H2O + H(+). Catalyzes the N-demethylation of aminopyrine and benzphetamine, but does not catalyze the hydroxylation of tolbutamide, testosterone, and progesterone. This chain is Cytochrome P450 2C28 (CYP2C28), found in Mesocricetus auratus (Golden hamster).